We begin with the raw amino-acid sequence, 145 residues long: Large ribosomal subunit protein uL13 (145 aa).

This sequence belongs to the universal ribosomal protein uL13 family. Part of the 50S ribosomal subunit.

Its function is as follows. This protein is one of the early assembly proteins of the 50S ribosomal subunit, although it is not seen to bind rRNA by itself. It is important during the early stages of 50S assembly. The chain is Large ribosomal subunit protein uL13 from Macrococcus caseolyticus (strain JCSC5402) (Macrococcoides caseolyticum).